The chain runs to 300 residues: Ribosomal protein L11 methyltransferase (300 aa).

Positions 148, 171, 193, and 235 each coordinate S-adenosyl-L-methionine.

It belongs to the methyltransferase superfamily. PrmA family.

The protein localises to the cytoplasm. The catalysed reaction is L-lysyl-[protein] + 3 S-adenosyl-L-methionine = N(6),N(6),N(6)-trimethyl-L-lysyl-[protein] + 3 S-adenosyl-L-homocysteine + 3 H(+). Functionally, methylates ribosomal protein L11. The chain is Ribosomal protein L11 methyltransferase from Desulfotalea psychrophila (strain LSv54 / DSM 12343).